Consider the following 159-residue polypeptide: Transcription elongation factor GreA (159 aa).

It belongs to the GreA/GreB family.

Necessary for efficient RNA polymerase transcription elongation past template-encoded arresting sites. The arresting sites in DNA have the property of trapping a certain fraction of elongating RNA polymerases that pass through, resulting in locked ternary complexes. Cleavage of the nascent transcript by cleavage factors such as GreA or GreB allows the resumption of elongation from the new 3'terminus. GreA releases sequences of 2 to 3 nucleotides. This is Transcription elongation factor GreA from Mycoplasmoides gallisepticum (strain R(low / passage 15 / clone 2)) (Mycoplasma gallisepticum).